The chain runs to 137 residues: Large-conductance mechanosensitive channel (137 aa).

3 helical membrane-spanning segments follow: residues Ile-15–Val-35, Ile-38–Gln-58, and Gly-80–Val-100.

Belongs to the MscL family. As to quaternary structure, homopentamer.

It localises to the cell inner membrane. In terms of biological role, channel that opens in response to stretch forces in the membrane lipid bilayer. May participate in the regulation of osmotic pressure changes within the cell. The chain is Large-conductance mechanosensitive channel from Bartonella quintana (strain Toulouse) (Rochalimaea quintana).